The primary structure comprises 448 residues: uncharacterized protein (448 aa).

As to expression, component of the acid-insoluble and acid-soluble organic matrix of the aragonitic skeleton (at protein level).

It is found in the secreted. This is an uncharacterized protein from Acropora millepora (Staghorn coral).